The following is a 449-amino-acid chain: Probable secreted beta-glucosidase ARB_04747 (449 aa).

The N-terminal stretch at 1-21 (MKFSSGILSLAVAASVQSVQA) is a signal peptide. An N-linked (GlcNAc...) asparagine glycan is attached at Asn57. A disordered region spans residues 96–185 (SPPACPAPSY…RPFPDGEIDC (90 aa)). The segment covering 98–125 (PACPAPSYVPSPPAAPSSPPAAPQPPSK) has biased composition (pro residues). The segment covering 131 to 150 (EEPKKPEEPKKPEGPKKPEG) has biased composition (basic and acidic residues).

It belongs to the SUN family.

It localises to the secreted. The protein resides in the cell wall. Cell surface beta-glucosidase involved in cytokinesis, cell wall biogenesis, adhesion to host tissue; thus playing an important role in the host-pathogen interaction. Has hydrolytic activity on linear (1-&gt;3)-beta-D-glucans such as laminaribiose and other laminarioligosaccharides. The sequence is that of Probable secreted beta-glucosidase ARB_04747 from Arthroderma benhamiae (strain ATCC MYA-4681 / CBS 112371) (Trichophyton mentagrophytes).